The chain runs to 204 residues: Imidazole glycerol phosphate synthase subunit HisH 1 (204 aa).

Residues lysine 5–leucine 204 enclose the Glutamine amidotransferase type-1 domain. The active-site Nucleophile is the cysteine 80. Residues histidine 186 and glutamate 188 contribute to the active site.

In terms of assembly, heterodimer of HisH and HisF.

The protein resides in the cytoplasm. It catalyses the reaction 5-[(5-phospho-1-deoxy-D-ribulos-1-ylimino)methylamino]-1-(5-phospho-beta-D-ribosyl)imidazole-4-carboxamide + L-glutamine = D-erythro-1-(imidazol-4-yl)glycerol 3-phosphate + 5-amino-1-(5-phospho-beta-D-ribosyl)imidazole-4-carboxamide + L-glutamate + H(+). It carries out the reaction L-glutamine + H2O = L-glutamate + NH4(+). The protein operates within amino-acid biosynthesis; L-histidine biosynthesis; L-histidine from 5-phospho-alpha-D-ribose 1-diphosphate: step 5/9. Functionally, IGPS catalyzes the conversion of PRFAR and glutamine to IGP, AICAR and glutamate. The HisH subunit provides the glutamine amidotransferase activity that produces the ammonia necessary to HisF for the synthesis of IGP and AICAR. This chain is Imidazole glycerol phosphate synthase subunit HisH 1 (hisH1), found in Vibrio vulnificus (strain YJ016).